The following is a 29-amino-acid chain: Kappa-sparatoxin-Hv1e (29 aa).

Cystine bridges form between C3–C17, C10–C22, and C16–C26.

As to expression, expressed by the venom gland.

The protein localises to the secreted. Its function is as follows. Inhibitor of voltage-gated potassium channels of the Kv4/KCND family. Blocks calcium channels (Cav). The polypeptide is Kappa-sparatoxin-Hv1e (Heteropoda venatoria (Brown huntsman spider)).